Consider the following 271-residue polypeptide: uncharacterized protein (271 aa).

Belongs to the HAD-like hydrolase superfamily.

This is an uncharacterized protein from Staphylococcus aureus.